Reading from the N-terminus, the 340-residue chain is Phosphate carrier protein, mitochondrial (340 aa).

The transit peptide at 1 to 27 (MSVFSQLAESSKQNPFSLPVRSGNCAS) directs the protein to the mitochondrion. Solcar repeat units follow at residues 41-125 (KYYA…FKNV), 138-222 (YRTS…TVEA), and 239-317 (EQLV…VKVA). Transmembrane regions (helical) follow at residues 47 to 67 (ALGGVLSCGITHTAIVPLDLV), 95 to 114 (RALVKGWAPTLLGYSAQGLG), 141 to 161 (SLYLAASASAEFFADILLAPM), 200 to 220 (PLWMRQIPYTMMKFACFEKTV), 241 to 261 (LVVTFVAGYIAGVFCAIVSHP), and 297 to 317 (IIMIGTLTALQWFIYDSVKVA).

Belongs to the mitochondrial carrier (TC 2.A.29) family.

The protein resides in the mitochondrion inner membrane. Its function is as follows. Transport of phosphate groups from the cytosol to the mitochondrial matrix. This chain is Phosphate carrier protein, mitochondrial, found in Caenorhabditis elegans.